A 111-amino-acid polypeptide reads, in one-letter code: Iron-sulfur cluster assembly protein CyaY (111 aa).

This sequence belongs to the frataxin family.

Its function is as follows. Involved in iron-sulfur (Fe-S) cluster assembly. May act as a regulator of Fe-S biogenesis. The polypeptide is Iron-sulfur cluster assembly protein CyaY (Cupriavidus taiwanensis (strain DSM 17343 / BCRC 17206 / CCUG 44338 / CIP 107171 / LMG 19424 / R1) (Ralstonia taiwanensis (strain LMG 19424))).